The primary structure comprises 410 residues: Protein translocase subunit SecY 2 (410 aa).

10 helical membrane passes run 2–22, 45–65, 94–114, 125–145, 147–167, 188–208, 241–261, 284–304, 339–359, and 366–386; these read ILIIYRALFFVTIPGVNSAAL, FSIMSLGVTAYITAQIIVQLL, LTLVLGLVQATGITLGINTLT, FTIIVIAVSMTAGSFIAMWLG, LITENGLGNGISVIITAGILV, WIRFSELMIGAAILILLIVWF, VIPVIFASTIMTIPQTILMFF, GVIIYGLMIIFFEYLYSIVQI, YLSLPGSLFLMLVSIIPLLVA, and LQIGLSGSSILIITGVLIEIG.

The protein belongs to the SecY/SEC61-alpha family. In terms of assembly, component of the Sec protein translocase complex. Heterotrimer consisting of SecY, SecE and SecG subunits. The heterotrimers can form oligomers, although 1 heterotrimer is thought to be able to translocate proteins. Interacts with the ribosome. Interacts with SecDF, and other proteins may be involved. Interacts with SecA.

It is found in the cell membrane. The central subunit of the protein translocation channel SecYEG. Consists of two halves formed by TMs 1-5 and 6-10. These two domains form a lateral gate at the front which open onto the bilayer between TMs 2 and 7, and are clamped together by SecE at the back. The channel is closed by both a pore ring composed of hydrophobic SecY resides and a short helix (helix 2A) on the extracellular side of the membrane which forms a plug. The plug probably moves laterally to allow the channel to open. The ring and the pore may move independently. The protein is Protein translocase subunit SecY 2 of Lactobacillus kefiranofaciens subsp. kefiranofaciens.